Consider the following 131-residue polypeptide: Histone H2B (131 aa).

A compositionally biased stretch (basic and acidic residues) spans 1–19 (MAPKAEKKPASKAPAEKKP). Positions 1–38 (MAPKAEKKPASKAPAEKKPAAKKTASSTDGGKKRTKAR) are disordered. An N6-acetyllysine; alternate mark is found at Lys7 and Lys8. Residues Lys7 and Lys8 each participate in a glycyl lysine isopeptide (Lys-Gly) (interchain with G-Cter in SUMO); alternate cross-link. Phosphoserine is present on Ser11. Position 12 is an N6-acetyllysine (Lys12). The residue at position 17 (Lys17) is an N6-acetyllysine; alternate. Lys17 participates in a covalent cross-link: Glycyl lysine isopeptide (Lys-Gly) (interchain with G-Cter in SUMO); alternate. Lys18 participates in a covalent cross-link: Glycyl lysine isopeptide (Lys-Gly) (interchain with G-Cter in SUMO). Residue Lys125 forms a Glycyl lysine isopeptide (Lys-Gly) (interchain with G-Cter in ubiquitin) linkage.

This sequence belongs to the histone H2B family. The nucleosome is a histone octamer containing two molecules each of H2A, H2B, H3 and H4 assembled in one H3-H4 heterotetramer and two H2A-H2B heterodimers. The octamer wraps approximately 147 bp of DNA. In terms of processing, monoubiquitinated by the UBC2-BRE1 complex to form H2BK123ub1. H2BK123ub1 gives a specific tag for epigenetic transcriptional activation and is also prerequisite for H3K4me and H3K79me formation. H2BK123ub1 also modulates the formation of double-strand breaks during meiosis and is a prerequisite for DNA-damage checkpoint activation. Phosphorylated by STE20 to form H2BS10ph during progression through meiotic prophase. May be correlated with chromosome condensation. Post-translationally, acetylated by GCN5 to form H2BK11ac and H2BK16ac. H2BK16ac can also be formed by ESA1. Acetylation of N-terminal lysines and particularly formation of H2BK11acK16ac has a positive effect on transcription. In terms of processing, sumoylation to form H2BK6su or H2BK7su, and probably also H2BK16su or H2BK17su, occurs preferentially near the telomeres and represses gene transcription.

The protein resides in the nucleus. Its subcellular location is the chromosome. Functionally, core component of nucleosome. Nucleosomes wrap and compact DNA into chromatin, limiting DNA accessibility to the cellular machineries which require DNA as a template. Histones thereby play a central role in transcription regulation, DNA repair, DNA replication and chromosomal stability. DNA accessibility is regulated via a complex set of post-translational modifications of histones, also called histone code, and nucleosome remodeling. The sequence is that of Histone H2B (HTB1) from Lodderomyces elongisporus (strain ATCC 11503 / CBS 2605 / JCM 1781 / NBRC 1676 / NRRL YB-4239) (Yeast).